The primary structure comprises 349 residues: Farnesyl pyrophosphate synthase vrtD (349 aa).

Residues K53, R56, and Q92 each contribute to the isopentenyl diphosphate site. The Mg(2+) site is built by D99 and D103. Residue R108 participates in dimethylallyl diphosphate binding. R109 contacts isopentenyl diphosphate. Dimethylallyl diphosphate is bound by residues K196, T197, Q236, K253, and K262.

This sequence belongs to the FPP/GGPP synthase family. It depends on Mg(2+) as a cofactor.

It catalyses the reaction isopentenyl diphosphate + dimethylallyl diphosphate = (2E)-geranyl diphosphate + diphosphate. The enzyme catalyses isopentenyl diphosphate + (2E)-geranyl diphosphate = (2E,6E)-farnesyl diphosphate + diphosphate. Its pathway is secondary metabolite biosynthesis; terpenoid biosynthesis. Its function is as follows. Farnesyl pyrophosphate synthase; part of the gene cluster that mediates the biosynthesis of viridicatumtoxin, a tetracycline-like fungal meroterpenoid with a unique, fused spirobicyclic ring system. The first step of the pathway is the production of the malonamoyl-CoA starter unit for the polyketide synthase vrtA. The aldolase vrtJ may be involved in the synthesis of the malonamate substrate for malonamoyl-CoA synthetase vrtB. The polyketide synthase vrtA then may utilize the malonamoyl-CoA starter unit, followed by sequential condensation of eight malonyl-CoA units to form the polyketide backbone. The cyclization of the last ring could be mediated by the lactamase-like protein vrtG. The proposed post-PKS tailoring steps are a hydroxylation at C5 catalyzed the cytochrome P450 monooxygenase vrtE, a hydroxylation at C12a catalyzed by VrtH and/or VrtI, and an O-methylation by the O-methyltransferase vrtF. VrtC is then proposed to catalyze the transfer of a geranyl group synthesized by vrtD to the aromatic C ring of the tetracyclic polyketide intermediate of viridicatumtoxin to yield previridicatumtoxin. Finally, the cytochrome P450 monooxygenase vrtK catalyzes the spirocyclization of the geranyl moiety of previridicatumtoxin to afford viridicatumtoxin. The sequence is that of Farnesyl pyrophosphate synthase vrtD from Penicillium aethiopicum.